A 320-amino-acid polypeptide reads, in one-letter code: tRNA U34 carboxymethyltransferase (320 aa).

Carboxy-S-adenosyl-L-methionine contacts are provided by residues lysine 89, tryptophan 103, lysine 108, glycine 128, 150 to 152 (DPT), 179 to 180 (IE), methionine 194, tyrosine 198, and arginine 313.

The protein belongs to the class I-like SAM-binding methyltransferase superfamily. CmoB family. Homotetramer.

The enzyme catalyses carboxy-S-adenosyl-L-methionine + 5-hydroxyuridine(34) in tRNA = 5-carboxymethoxyuridine(34) in tRNA + S-adenosyl-L-homocysteine + H(+). Catalyzes carboxymethyl transfer from carboxy-S-adenosyl-L-methionine (Cx-SAM) to 5-hydroxyuridine (ho5U) to form 5-carboxymethoxyuridine (cmo5U) at position 34 in tRNAs. The sequence is that of tRNA U34 carboxymethyltransferase from Actinobacillus pleuropneumoniae serotype 7 (strain AP76).